We begin with the raw amino-acid sequence, 186 residues long: Elongation factor P (186 aa).

Belongs to the elongation factor P family.

Its subcellular location is the cytoplasm. The protein operates within protein biosynthesis; polypeptide chain elongation. In terms of biological role, involved in peptide bond synthesis. Stimulates efficient translation and peptide-bond synthesis on native or reconstituted 70S ribosomes in vitro. Probably functions indirectly by altering the affinity of the ribosome for aminoacyl-tRNA, thus increasing their reactivity as acceptors for peptidyl transferase. The polypeptide is Elongation factor P (Shewanella frigidimarina (strain NCIMB 400)).